A 136-amino-acid polypeptide reads, in one-letter code: Ribosome-binding factor A (136 aa).

Residues 116-136 (AGNHKASDEEESDDKGHEDEQ) form a disordered region.

Belongs to the RbfA family. As to quaternary structure, monomer. Binds 30S ribosomal subunits, but not 50S ribosomal subunits or 70S ribosomes.

It is found in the cytoplasm. Functionally, one of several proteins that assist in the late maturation steps of the functional core of the 30S ribosomal subunit. Associates with free 30S ribosomal subunits (but not with 30S subunits that are part of 70S ribosomes or polysomes). Required for efficient processing of 16S rRNA. May interact with the 5'-terminal helix region of 16S rRNA. This Lachnoclostridium phytofermentans (strain ATCC 700394 / DSM 18823 / ISDg) (Clostridium phytofermentans) protein is Ribosome-binding factor A.